Consider the following 292-residue polypeptide: tRNA-cytidine(32) 2-sulfurtransferase (292 aa).

Residues 53–58 (SGGKDS) carry the PP-loop motif motif. Positions 128, 131, and 219 each coordinate [4Fe-4S] cluster.

It belongs to the TtcA family. Homodimer. Mg(2+) serves as cofactor. The cofactor is [4Fe-4S] cluster.

It localises to the cytoplasm. The enzyme catalyses cytidine(32) in tRNA + S-sulfanyl-L-cysteinyl-[cysteine desulfurase] + AH2 + ATP = 2-thiocytidine(32) in tRNA + L-cysteinyl-[cysteine desulfurase] + A + AMP + diphosphate + H(+). Its pathway is tRNA modification. Functionally, catalyzes the ATP-dependent 2-thiolation of cytidine in position 32 of tRNA, to form 2-thiocytidine (s(2)C32). The sulfur atoms are provided by the cysteine/cysteine desulfurase (IscS) system. The chain is tRNA-cytidine(32) 2-sulfurtransferase from Cereibacter sphaeroides (strain ATCC 17023 / DSM 158 / JCM 6121 / CCUG 31486 / LMG 2827 / NBRC 12203 / NCIMB 8253 / ATH 2.4.1.) (Rhodobacter sphaeroides).